Here is a 69-residue protein sequence, read N- to C-terminus: Large ribosomal subunit protein bL32c (69 aa).

The protein belongs to the bacterial ribosomal protein bL32 family.

The protein localises to the plastid. It localises to the chloroplast. This chain is Large ribosomal subunit protein bL32c, found in Pelargonium hortorum (Common geranium).